Here is a 129-residue protein sequence, read N- to C-terminus: D-ribose pyranase (129 aa).

Histidine 20 (proton donor) is an active-site residue. Substrate-binding positions include aspartate 28, histidine 96, and 118 to 120; that span reads YAN.

This sequence belongs to the RbsD / FucU family. RbsD subfamily. As to quaternary structure, homodecamer.

It is found in the cytoplasm. The catalysed reaction is beta-D-ribopyranose = beta-D-ribofuranose. Its pathway is carbohydrate metabolism; D-ribose degradation; D-ribose 5-phosphate from beta-D-ribopyranose: step 1/2. Functionally, catalyzes the interconversion of beta-pyran and beta-furan forms of D-ribose. The polypeptide is D-ribose pyranase (Streptomyces coelicolor (strain ATCC BAA-471 / A3(2) / M145)).